The sequence spans 139 residues: Flagellar assembly factor FliW 2 (139 aa).

It belongs to the FliW family. As to quaternary structure, interacts with translational regulator CsrA and flagellin(s).

Its subcellular location is the cytoplasm. Functionally, acts as an anti-CsrA protein, binds CsrA and prevents it from repressing translation of its target genes, one of which is flagellin. Binds to flagellin and participates in the assembly of the flagellum. This is Flagellar assembly factor FliW 2 from Helicobacter hepaticus (strain ATCC 51449 / 3B1).